Reading from the N-terminus, the 164-residue chain is MSSSVSSKTRYWVLALAAIVLDQWSKWAVLSSFQYRERVNVIPSFFDLTLVYNPGAAFSFLADQGGWQKYFFLVLAVAVSAYLVRAILRDEFAALGKIGAAMIIGGASGNVIDRLIHGHVVDFLLFYWQNWFYPAFNIADSFICVGAVLAVLDNIVHRKDSKKT.

4 helical membrane-spanning segments follow: residues 11–31 (YWVLALAAIVLDQWSKWAVLS), 41–61 (VIPSFFDLTLVYNPGAAFSFL), 64–84 (QGGWQKYFFLVLAVAVSAYLV), and 92–112 (FAALGKIGAAMIIGGASGNVI). Residues aspartate 122 and aspartate 140 contribute to the active site. Residues 132-152 (FYPAFNIADSFICVGAVLAVL) traverse the membrane as a helical segment.

The protein belongs to the peptidase A8 family.

Its subcellular location is the cell inner membrane. The catalysed reaction is Release of signal peptides from bacterial membrane prolipoproteins. Hydrolyzes -Xaa-Yaa-Zaa-|-(S,diacylglyceryl)Cys-, in which Xaa is hydrophobic (preferably Leu), and Yaa (Ala or Ser) and Zaa (Gly or Ala) have small, neutral side chains.. It participates in protein modification; lipoprotein biosynthesis (signal peptide cleavage). Functionally, this protein specifically catalyzes the removal of signal peptides from prolipoproteins. This is Lipoprotein signal peptidase from Neisseria gonorrhoeae (strain ATCC 700825 / FA 1090).